The sequence spans 71 residues: MLILTRRVGETLMIGDDVSVTVLGVKGNQVRIGVNAPRDVSVHREEIYERIRHEKDGDVPEAAPGQGADPQ.

The segment at 50–71 is disordered; that stretch reads RIRHEKDGDVPEAAPGQGADPQ.

Belongs to the CsrA/RsmA family. As to quaternary structure, homodimer; the beta-strands of each monomer intercalate to form a hydrophobic core, while the alpha-helices form wings that extend away from the core.

It localises to the cytoplasm. Functionally, a key translational regulator that binds mRNA to regulate translation initiation and/or mRNA stability. Mediates global changes in gene expression, shifting from rapid growth to stress survival by linking envelope stress, the stringent response and the catabolite repression systems. Usually binds in the 5'-UTR; binding at or near the Shine-Dalgarno sequence prevents ribosome-binding, repressing translation, binding elsewhere in the 5'-UTR can activate translation and/or stabilize the mRNA. Its function is antagonized by small RNA(s). In Halorhodospira halophila (strain DSM 244 / SL1) (Ectothiorhodospira halophila (strain DSM 244 / SL1)), this protein is Translational regulator CsrA.